The sequence spans 449 residues: NADP-specific glutamate dehydrogenase (449 aa).

K125 is a catalytic residue.

The protein belongs to the Glu/Leu/Phe/Val dehydrogenases family. In terms of assembly, homohexamer.

The enzyme catalyses L-glutamate + NADP(+) + H2O = 2-oxoglutarate + NH4(+) + NADPH + H(+). This chain is NADP-specific glutamate dehydrogenase, found in Giardia intestinalis (Giardia lamblia).